Consider the following 50-residue polypeptide: AIFVDLEPTVIDEVRSLDIERPTYTNLNRFDGAINVDVTEFQTNLVPYPR.

N28 provides a ligand contact to GTP. The active site involves E40.

The protein belongs to the tubulin family. As to quaternary structure, dimer of alpha and beta chains. A typical microtubule is a hollow water-filled tube with an outer diameter of 25 nm and an inner diameter of 15 nM. Alpha-beta heterodimers associate head-to-tail to form protofilaments running lengthwise along the microtubule wall with the beta-tubulin subunit facing the microtubule plus end conferring a structural polarity. Microtubules usually have 13 protofilaments but different protofilament numbers can be found in some organisms and specialized cells. The cofactor is Mg(2+).

It is found in the cytoplasm. The protein resides in the cytoskeleton. The enzyme catalyses GTP + H2O = GDP + phosphate + H(+). Tubulin is the major constituent of microtubules, a cylinder consisting of laterally associated linear protofilaments composed of alpha- and beta-tubulin heterodimers. Microtubules grow by the addition of GTP-tubulin dimers to the microtubule end, where a stabilizing cap forms. Below the cap, tubulin dimers are in GDP-bound state, owing to GTPase activity of alpha-tubulin. This Populus euphratica (Euphrates poplar) protein is Tubulin alpha chain.